Consider the following 604-residue polypeptide: MDHIRNFSIIAHIDHGKSTLADRIIQRCGGLSDREMEAQVLDSMDIERERGITIKAQTAALNYKARDGRVYQLNLIDTPGHVDFSYEVSRSLSACEGALLVVDASQGVEAQTVANCYTALDLGVEVVPVLNKMDLPQADPENAKAEIEDVIGIDAEHAIPCSAKTGEGIDEILEAVITRMPAPRGQPDGPPRAMIIDSWFDNYVGVVMLVRMVDGVLRKGDRIRMMATDTVYPLEQLGVFAPKSESREQLKAGEVGFLIAGIKELQAAKVGDTITLEKKLPNNAGPASDPLPGFKEIQPQVFAGLYPTEASEYDQLRDALEKLKLNDSSLRYEPEVSQALGFGFRCGFLGLLHMEIVQERLEREFDQDLITTAPSVVYQVQLGGLAGEVIEVENPSKMPEIGKIAEIREPIVTVHLYMPQDYVGPVMTLANQKRGVQLNMAYHGRQVMLTYEMPLAEIVLDFFDKLKSVSRGYASMDYEFKEYRAADVVKVDILINGDRVDALSIIVHRSQSQYRGRAVVAKMREIISRQMYDVAIQAAIGANIIARENIKALRKNVLAKCYGGDISRKRKLLEKQKAGKKRMKQIGSVEVPQEAFLAILQVDD.

The region spanning 2 to 184 (DHIRNFSIIA…AVITRMPAPR (183 aa)) is the tr-type G domain. Residues 14-19 (DHGKST) and 131-134 (NKMD) contribute to the GTP site.

Belongs to the TRAFAC class translation factor GTPase superfamily. Classic translation factor GTPase family. LepA subfamily.

It is found in the cell inner membrane. It carries out the reaction GTP + H2O = GDP + phosphate + H(+). Required for accurate and efficient protein synthesis under certain stress conditions. May act as a fidelity factor of the translation reaction, by catalyzing a one-codon backward translocation of tRNAs on improperly translocated ribosomes. Back-translocation proceeds from a post-translocation (POST) complex to a pre-translocation (PRE) complex, thus giving elongation factor G a second chance to translocate the tRNAs correctly. Binds to ribosomes in a GTP-dependent manner. This Methylibium petroleiphilum (strain ATCC BAA-1232 / LMG 22953 / PM1) protein is Elongation factor 4.